Here is a 163-residue protein sequence, read N- to C-terminus: Nucleotide-binding protein CKO_02735 (163 aa).

Belongs to the YajQ family.

Nucleotide-binding protein. This Citrobacter koseri (strain ATCC BAA-895 / CDC 4225-83 / SGSC4696) protein is Nucleotide-binding protein CKO_02735.